A 316-amino-acid chain; its full sequence is Probable cell division protein WhiA (316 aa).

The segment at residues 275 to 309 is a DNA-binding region (H-T-H motif); sequence TLKELGEMVESGKISKSGINHRLRKLDQIAEQLRN.

Belongs to the WhiA family.

Its function is as follows. Involved in cell division and chromosome segregation. The protein is Probable cell division protein WhiA of Bacillus pumilus (strain SAFR-032).